Consider the following 414-residue polypeptide: Putative nickel insertion protein (414 aa).

A disordered region spans residues 70-91 (ATHHDHDHSQDQTHHHHADHAP).

It belongs to the LarC family.

The polypeptide is Putative nickel insertion protein (Picosynechococcus sp. (strain ATCC 27264 / PCC 7002 / PR-6) (Agmenellum quadruplicatum)).